The primary structure comprises 344 residues: Glucan endo-1,3-beta-glucosidase (344 aa).

A signal peptide spans 1–27; the sequence is MALTRNRPFVVVLLLGFVIMSTITIGA. The active-site Proton donor is the Glu123. The active-site Nucleophile is the Glu268.

It belongs to the glycosyl hydrolase 17 family.

The catalysed reaction is Hydrolysis of (1-&gt;3)-beta-D-glucosidic linkages in (1-&gt;3)-beta-D-glucans.. In terms of biological role, implicated in the defense of plants against pathogens. This Vitis vinifera (Grape) protein is Glucan endo-1,3-beta-glucosidase.